The chain runs to 671 residues: DNA ligase (671 aa).

NAD(+)-binding positions include 38–42 (DKEFD), 87–88 (SL), and Glu-113. Lys-115 (N6-AMP-lysine intermediate) is an active-site residue. NAD(+)-binding residues include Arg-136, Glu-170, Lys-282, and Lys-306. Cys-396, Cys-399, Cys-414, and Cys-419 together coordinate Zn(2+). One can recognise a BRCT domain in the interval 586–671 (SDLQPFVGQS…LLKQEGIAID (86 aa)).

Belongs to the NAD-dependent DNA ligase family. LigA subfamily. The cofactor is Mg(2+). Mn(2+) serves as cofactor.

It carries out the reaction NAD(+) + (deoxyribonucleotide)n-3'-hydroxyl + 5'-phospho-(deoxyribonucleotide)m = (deoxyribonucleotide)n+m + AMP + beta-nicotinamide D-nucleotide.. DNA ligase that catalyzes the formation of phosphodiester linkages between 5'-phosphoryl and 3'-hydroxyl groups in double-stranded DNA using NAD as a coenzyme and as the energy source for the reaction. It is essential for DNA replication and repair of damaged DNA. The sequence is that of DNA ligase from Leptospira biflexa serovar Patoc (strain Patoc 1 / Ames).